Here is a 190-residue protein sequence, read N- to C-terminus: RNA-binding protein OPG065 (190 aa).

The 66-residue stretch at Y5–T70 folds into the Z-binding domain. Residues N117–G184 form the DRBM domain.

This sequence belongs to the orthopoxvirus OPG065 family. As to quaternary structure, interacts with host G1P2/ISG15. Interacts with host EIF2AK2/PKR. Interacts with host ZBP1.

RNA-binding protein that plays a role in the inhibition of multiple cellular antiviral responses activated by double-stranded RNA (dsRNA), such as inhibition of PKR activation, necroptosis, and IFN-mediated antiviral activities. Recognizes and binds Z-RNA structures via its Z-binding domain and dsRNA via its DRBM domain: RNA-binding activity is required to escape host ZBP1-dependent necroptosis. Mechanistically, the Z-binding domain binds Z-RNAs that are produced during vaccinia virus infection, thereby competing with Z-RNA detection by host ZBP1, suppressing ZBP1-dependent necroptosis. Acts as a key inhibitor of the interferon response by blocking the phosphorylation and subsequent activation of IRF3 and IRF7 kinases that are required for interferon-alpha gene expression. Inhibits NF-kappa-B activation and the ubiquitin-like protein ISG15, which is an early antiviral protein. The binding with host ISG15 subsequently blocks host ISGylation. The sequence is that of RNA-binding protein OPG065 (OPG065) from Homo sapiens (Human).